Consider the following 129-residue polypeptide: Follitropin subunit beta (129 aa).

Residues 1-18 form the signal peptide; the sequence is MKTVQFCFLFCCWKAICC. 6 disulfides stabilise this stretch: Cys21–Cys69, Cys35–Cys84, Cys38–Cys122, Cys46–Cys100, Cys50–Cys102, and Cys105–Cys112. N-linked (GlcNAc...) asparagine glycosylation is found at Asn25 and Asn42.

Belongs to the glycoprotein hormones subunit beta family. In terms of assembly, heterodimer. The active follitropin is a heterodimer composed of an alpha chain/CGA shared with other hormones and a unique beta chain/FSHB shown here.

The protein localises to the secreted. In terms of biological role, together with the alpha chain CGA constitutes follitropin, the follicle-stimulating hormone, and provides its biological specificity to the hormone heterodimer. Binds FSHR, a G protein-coupled receptor, on target cells to activate downstream signaling pathways. Follitropin is involved in follicle development and spermatogenesis in reproductive organs. The polypeptide is Follitropin subunit beta (FSHB) (Macaca fascicularis (Crab-eating macaque)).